A 233-amino-acid chain; its full sequence is Putative N-acetylmannosamine-6-phosphate 2-epimerase (233 aa).

This sequence belongs to the NanE family.

The catalysed reaction is an N-acyl-D-glucosamine 6-phosphate = an N-acyl-D-mannosamine 6-phosphate. It functions in the pathway amino-sugar metabolism; N-acetylneuraminate degradation; D-fructose 6-phosphate from N-acetylneuraminate: step 3/5. Functionally, converts N-acetylmannosamine-6-phosphate (ManNAc-6-P) to N-acetylglucosamine-6-phosphate (GlcNAc-6-P). The chain is Putative N-acetylmannosamine-6-phosphate 2-epimerase from Yersinia pseudotuberculosis serotype IB (strain PB1/+).